The sequence spans 1187 residues: Protein WWC2 (1187 aa).

WW domains are found at residues 10 to 43 (LPLP…DPRD) and 57 to 90 (DELP…DPRK). 2 coiled-coil regions span residues 121–194 (KEQR…YKQQ) and 224–256 (ELKS…FHLD). A Phosphoserine modification is found at serine 286. Residues 302 to 423 (LAEKVRLSLQ…EETTKLTTSL (122 aa)) adopt a coiled-coil conformation. Residues 438–464 (SSGSSLGSLASSRGSLNTSSRGSLNSL) form a disordered region. Residues 697-820 (ETAQVQIGLR…FSNEIFMLWY (124 aa)) enclose the C2 domain. 2 disordered regions span residues 830 to 849 (CKKN…QPML) and 874 to 963 (ELAQ…ETNT). A coiled-coil region spans residues 859 to 885 (ALLARTSAELLAVEQELAQEEEEEELR). A compositionally biased stretch (acidic residues) spans 875 to 884 (LAQEEEEEEL). Threonine 999 is modified (phosphothreonine). The residue at position 1017 (serine 1017) is a Phosphoserine. An interaction with PRKCZ region spans residues 1026–1045 (SLFVRNSTERRSLRVKRAVC). The stretch at 1063 to 1143 (DLELDLQASL…DLNAERLMRQ (81 aa)) forms a coiled coil.

Belongs to the WWC family. As to quaternary structure, forms homodimers and heterodimers with WWC1 and WWC3. Interacts with DLC1 and PRKCZ. Interacts (via WW domains) with LATS1 and LATS2.

The protein resides in the cytoplasm. It localises to the cytosol. Regulator of the Hippo signaling pathway, also known as the Salvador-Warts-Hippo (SWH) pathway. Enhances phosphorylation of LATS1 and YAP1 and negatively regulates cell proliferation and organ growth due to a suppression of the transcriptional activity of YAP1, the major effector of the Hippo pathway. This is Protein WWC2 (Wwc2) from Mus musculus (Mouse).